Consider the following 500-residue polypeptide: Na(+)/H(+) antiporter NhaB (500 aa).

Helical transmembrane passes span 23-43, 53-73, 96-116, 129-149, 150-170, 205-225, 238-258, 311-331, 350-370, 450-470, and 477-497; these read VVICLFLVLNPLLLVTIGPVA, IFTLAMALKCYPLMPGGLLLI, VILLLMFMVAGIHFMKELLLF, AILALLFCVLSAFLSAFLDAL, TVTAVIISAAVGFYAVYHRVA, LLMHGAVGTALGGVCTLVGEP, FVDFFLKVAPVSLPVLGAGLV, ILIICLGLHVAEVGLIGLMVI, FQDAMPFTSLLVVFFAVVAVI, ATPNGQAAFLFLLTSAIAPLI, and MVWMALPYTVVMGGLGWWAVT.

This sequence belongs to the NhaB Na(+)/H(+) (TC 2.A.34) antiporter family.

Its subcellular location is the cell inner membrane. It carries out the reaction 2 Na(+)(in) + 3 H(+)(out) = 2 Na(+)(out) + 3 H(+)(in). Functionally, na(+)/H(+) antiporter that extrudes sodium in exchange for external protons. The chain is Na(+)/H(+) antiporter NhaB from Pseudomonas putida (strain ATCC 47054 / DSM 6125 / CFBP 8728 / NCIMB 11950 / KT2440).